The sequence spans 1798 residues: Laminin subunit beta-2 (1798 aa).

Positions 1 to 32 are cleaved as a signal peptide; that stretch reads MELTSRERGRGQPLPWELRLGLLLSVLAATLA. The region spanning 43 to 282 is the Laminin N-terminal domain; the sequence is SRGSCYPATG…ALYELVVRGN (240 aa). N-linked (GlcNAc...) asparagine glycosylation is present at N248. 19 disulfides stabilise this stretch: C283–C292, C285–C310, C312–C321, C324–C344, C347–C356, C349–C374, C377–C386, C389–C407, C410–C423, C412–C438, C440–C449, C452–C467, C470–C484, C472–C491, C493–C502, C505–C519, C522–C534, C524–C541, and C543–C552. Laminin EGF-like domains follow at residues 283 to 346, 347 to 409, 410 to 469, and 470 to 521; these read CFCY…ACRK, CECH…VCRS, CDCD…GCRR, and CQCN…GCRP. N-linked (GlcNAc...) asparagine glycosylation occurs at N368. The Laminin EGF-like 5; truncated domain maps to 522-552; the sequence is CDCDVGGALDPQCDEGTGQCHCRQHMVGRRC. A Laminin IV type B domain is found at 561–777; that stretch reads RPFLDHLIWE…LLISLSTLIY (217 aa). 32 disulfides stabilise this stretch: C783-C795, C785-C802, C804-C813, C816-C828, C831-C843, C833-C850, C852-C861, C864-C874, C877-C886, C879-C893, C896-C905, C908-C924, C927-C943, C929-C954, C956-C965, C968-C983, C986-C1000, C988-C1007, C1010-C1019, C1022-C1035, C1038-C1058, C1040-C1065, C1067-C1076, C1079-C1092, C1095-C1107, C1097-C1114, C1116-C1125, C1128-C1140, C1143-C1155, C1145-C1162, C1164-C1173, and C1176-C1187. Laminin EGF-like domains are found at residues 783-830, 831-876, 877-926, 927-985, 986-1037, 1038-1094, 1095-1142, and 1143-1189; these read CQCN…GCQA, CQCS…SCRP, CVCN…QCRP, CPCP…RCQL, CECS…SCHR, CTCN…GCQP, CACH…QCHA, and CDCD…ACHP. N-linked (GlcNAc...) asparagine glycosylation occurs at N1085. Positions 1190–1409 are domain II; the sequence is CHACFGDWDR…LSLTDINELV (220 aa). N-linked (GlcNAc...) asparagine glycans are attached at residues N1249, N1308, and N1348. The stretch at 1253 to 1319 forms a coiled coil; that stretch reads ASTAQLVEAT…TLRQLDQHLD (67 aa). Residues 1338–1364 are disordered; the sequence is SQSAEAERRANTSALAVPSPVSNSASA. Over residues 1350-1363 the composition is skewed to low complexity; it reads SALAVPSPVSNSAS. Residues 1410 to 1442 form a domain alpha region; that stretch reads CGAPGDAPCATSPCGGAGCRDEDGQPRCGGLSC. Positions 1443–1798 are domain I; sequence NGAAATADLA…LQVQIYNTCQ (356 aa). Positions 1472–1526 form a coiled coil; sequence SILSRVAETRRQASEAQQRAQAALDKANASRGQVEQANQELQELIQSVKDFLNQE. An N-linked (GlcNAc...) asparagine glycan is attached at N1499. Residue S1532 is modified to Phosphoserine; by FAM20C. Residues 1577–1790 adopt a coiled-coil conformation; sequence VGDVRRAEQL…RSVLQAINLQ (214 aa).

In terms of assembly, laminin is a complex glycoprotein, consisting of three different polypeptide chains (alpha, beta, gamma), which are bound to each other by disulfide bonds into a cross-shaped molecule comprising one long and three short arms with globules at each end. Beta-2 is a subunit of laminin-3 (laminin-121 or S-laminin), laminin-4 (laminin-221 or S-merosin), laminin-7 (laminin-321 or KS-laminin), laminin-9 (laminin-421), laminin-11 (laminin-521), laminin-14 (laminin-423) and laminin-15 (laminin-523).

It is found in the secreted. Its subcellular location is the extracellular space. The protein resides in the extracellular matrix. The protein localises to the basement membrane. Functionally, binding to cells via a high affinity receptor, laminin is thought to mediate the attachment, migration and organization of cells into tissues during embryonic development by interacting with other extracellular matrix components. This chain is Laminin subunit beta-2 (LAMB2), found in Homo sapiens (Human).